Here is a 262-residue protein sequence, read N- to C-terminus: Catechol O-methyltransferase domain-containing protein 1 (262 aa).

The chain crosses the membrane as a helical; Signal-anchor for type II membrane protein span at residues 12–32 (AALALGSAALGAAFATGLFLG). S-adenosyl-L-methionine-binding positions include Asp-108, 110-111 (GT), Ser-116, Glu-134, Val-135, Ala-163, Asp-185, Asp-187, and Tyr-194.

It belongs to the class I-like SAM-binding methyltransferase superfamily. Cation-dependent O-methyltransferase family. As to quaternary structure, homodimer.

It localises to the membrane. Functionally, putative O-methyltransferase. The chain is Catechol O-methyltransferase domain-containing protein 1 (COMTD1) from Homo sapiens (Human).